The primary structure comprises 138 residues: Small ribosomal subunit protein uS11c (138 aa).

Belongs to the universal ribosomal protein uS11 family. As to quaternary structure, part of the 30S ribosomal subunit.

The protein resides in the plastid. The protein localises to the chloroplast. This chain is Small ribosomal subunit protein uS11c, found in Acorus calamus (Sweet flag).